We begin with the raw amino-acid sequence, 233 residues long: NADP-dependent glyceraldehyde-3-phosphate dehydrogenase (233 aa).

Residue 7–8 (NY) participates in substrate binding. The NADP(+) site is built by lysine 30 and serine 33. 83–87 (GGDTG) provides a ligand contact to NAD(+). Glutamate 102 acts as the Proton acceptor in catalysis. 135–137 (RCT) serves as a coordination point for substrate. The active-site Nucleophile is cysteine 136. Glutamate 180 and glutamate 229 together coordinate NADP(+).

It belongs to the aldehyde dehydrogenase family.

The protein localises to the cytoplasm. It catalyses the reaction D-glyceraldehyde 3-phosphate + NADP(+) + H2O = (2R)-3-phosphoglycerate + NADPH + 2 H(+). In terms of biological role, important as a means of generating NADPH for biosynthetic reactions. In Scenedesmus vacuolatus (Green alga), this protein is NADP-dependent glyceraldehyde-3-phosphate dehydrogenase (GapN).